The following is a 684-amino-acid chain: Ski-like protein (684 aa).

Glycyl lysine isopeptide (Lys-Gly) (interchain with G-Cter in SUMO2) cross-links involve residues lysine 50 and lysine 70. Residues 420 to 454 (SQSKELTKTEASKSISRQSEKAHSSGKLQKTVSYP) are disordered. Residue serine 452 is modified to Phosphoserine. Residues lysine 489 and lysine 527 each participate in a glycyl lysine isopeptide (Lys-Gly) (interchain with G-Cter in SUMO2) cross-link. Residues 536–684 (RTYLKQQEKL…ILKSSKTAKE (149 aa)) are a coiled coil.

The protein belongs to the SKI family. In terms of assembly, interacts with CPNE4 (via VWFA domain). Interacts with SMAD2, SMAD3 and RNF111. Isoform 1 interacts with WWP1. Post-translationally, ubiquitinated by RNF111 and ARK2C, promoting proteasomal degradation, leading to enhance the BMP-Smad signaling. Isoform SNON and isoform SNOA are widely expressed. Highest expression is found in skeletal muscle, followed by placenta and lung. Lowest expression in heart, brain and pancreas. Isoform SNOI expression is restricted to skeletal muscle.

May have regulatory role in cell division or differentiation in response to extracellular signals. This chain is Ski-like protein (SKIL), found in Homo sapiens (Human).